The chain runs to 741 residues: Catalase-peroxidase (741 aa).

A signal peptide spans 1 to 23; sequence MLKKIVTALGMSGMLLASSNAIA. A cross-link (tryptophyl-tyrosyl-methioninium (Trp-Tyr) (with M-249)) is located at residues 102 to 223; that stretch reads WHDAGTYRIY…YAATQMGLIY (122 aa). Residue His103 is the Proton acceptor of the active site. The segment at residues 223-249 is a cross-link (tryptophyl-tyrosyl-methioninium (Tyr-Met) (with W-102)); sequence YVNPEGPDGKPDIKGAASEIRQAFRAM. His264 is a heme b binding site.

This sequence belongs to the peroxidase family. Peroxidase/catalase subfamily. Homodimer or homotetramer. Heme b serves as cofactor. Post-translationally, formation of the three residue Trp-Tyr-Met cross-link is important for the catalase, but not the peroxidase activity of the enzyme.

It carries out the reaction H2O2 + AH2 = A + 2 H2O. It catalyses the reaction 2 H2O2 = O2 + 2 H2O. In terms of biological role, bifunctional enzyme with both catalase and broad-spectrum peroxidase activity. This Francisella tularensis subsp. tularensis (strain FSC 198) protein is Catalase-peroxidase.